Here is a 262-residue protein sequence, read N- to C-terminus: Phosphatidylglycerol--prolipoprotein diacylglyceryl transferase (262 aa).

4 helical membrane-spanning segments follow: residues 9 to 29 (LGPL…ILAV), 41 to 61 (IIPD…ILGA), 80 to 100 (IFAI…GALV), and 109 to 129 (LINT…AQSL). A 1,2-diacyl-sn-glycero-3-phospho-(1'-sn-glycerol) is bound at residue arginine 131. The next 3 membrane-spanning stretches (helical) occupy residues 167–187 (QPTF…ILIF), 197–217 (GHIT…IEGM), and 226–246 (GFRV…MIVI).

The protein belongs to the Lgt family.

Its subcellular location is the cell membrane. It carries out the reaction L-cysteinyl-[prolipoprotein] + a 1,2-diacyl-sn-glycero-3-phospho-(1'-sn-glycerol) = an S-1,2-diacyl-sn-glyceryl-L-cysteinyl-[prolipoprotein] + sn-glycerol 1-phosphate + H(+). It participates in protein modification; lipoprotein biosynthesis (diacylglyceryl transfer). Functionally, catalyzes the transfer of the diacylglyceryl group from phosphatidylglycerol to the sulfhydryl group of the N-terminal cysteine of a prolipoprotein, the first step in the formation of mature lipoproteins. This chain is Phosphatidylglycerol--prolipoprotein diacylglyceryl transferase, found in Streptococcus pneumoniae serotype 4 (strain ATCC BAA-334 / TIGR4).